The following is a 465-amino-acid chain: Uronate isomerase (465 aa).

It belongs to the metallo-dependent hydrolases superfamily. Uronate isomerase family.

The enzyme catalyses D-glucuronate = D-fructuronate. The catalysed reaction is aldehydo-D-galacturonate = keto-D-tagaturonate. It functions in the pathway carbohydrate metabolism; pentose and glucuronate interconversion. This Streptococcus equi subsp. zooepidemicus (strain H70) protein is Uronate isomerase.